The following is a 356-amino-acid chain: Sporulation minus regulator 1 (356 aa).

Residues 183 to 199 (HPLRQLPGNPWHKFFGN) mediate DNA binding.

The protein to N.crassa mta-2.

Its subcellular location is the nucleus. Its function is as follows. Transcriptional activator that is required for post-fertilization events. It is required for the developmental events that occur in the female organ after fertilization. In Podospora anserina (Pleurage anserina), this protein is Sporulation minus regulator 1 (SMR1).